Here is a 264-residue protein sequence, read N- to C-terminus: Phosphatidylglycerol--prolipoprotein diacylglyceryl transferase (264 aa).

Transmembrane regions (helical) follow at residues 14 to 34, 60 to 80, 98 to 118, 128 to 148, 176 to 196, 203 to 223, and 240 to 260; these read IIFSIGPIALRWYGLMYLIGF, LIYTCFWGVILGGRIGDVFFY, GGMSFHGGLIGVIVAMIWVSF, ADFIAPLIPFGLGMGRIGNFI, SQLYEFFLEGVVLFFILNWFI, GSVAGLFLIGYGVFRFLVEYV, and GQLLSLPMIIGGLAIMIWAYS. Position 143 (Arg-143) interacts with a 1,2-diacyl-sn-glycero-3-phospho-(1'-sn-glycerol).

It belongs to the Lgt family.

It localises to the cell inner membrane. It catalyses the reaction L-cysteinyl-[prolipoprotein] + a 1,2-diacyl-sn-glycero-3-phospho-(1'-sn-glycerol) = an S-1,2-diacyl-sn-glyceryl-L-cysteinyl-[prolipoprotein] + sn-glycerol 1-phosphate + H(+). The protein operates within protein modification; lipoprotein biosynthesis (diacylglyceryl transfer). Its function is as follows. Catalyzes the transfer of the diacylglyceryl group from phosphatidylglycerol to the sulfhydryl group of the N-terminal cysteine of a prolipoprotein, the first step in the formation of mature lipoproteins. The chain is Phosphatidylglycerol--prolipoprotein diacylglyceryl transferase from Actinobacillus pleuropneumoniae serotype 7 (strain AP76).